The chain runs to 108 residues: Tetrahydromethanopterin S-methyltransferase subunit B (108 aa).

The helical transmembrane segment at 79 to 99 threads the bilayer; it reads GMFFGFWVTMAILVLVTILAV.

The protein belongs to the MtrB family. The complex is composed of 8 subunits; MtrA, MtrB, MtrC, MtrD, MtrE, MtrF, MtrG and MtrH.

It is found in the cell membrane. It catalyses the reaction 5-methyl-5,6,7,8-tetrahydromethanopterin + coenzyme M + 2 Na(+)(in) = 5,6,7,8-tetrahydromethanopterin + methyl-coenzyme M + 2 Na(+)(out). The protein operates within one-carbon metabolism; methanogenesis from CO(2); methyl-coenzyme M from 5,10-methylene-5,6,7,8-tetrahydromethanopterin: step 2/2. In terms of biological role, part of a complex that catalyzes the formation of methyl-coenzyme M and tetrahydromethanopterin from coenzyme M and methyl-tetrahydromethanopterin. This is an energy-conserving, sodium-ion translocating step. This is Tetrahydromethanopterin S-methyltransferase subunit B from Methanococcus maripaludis (strain C5 / ATCC BAA-1333).